The chain runs to 173 residues: Shikimate kinase 1 (173 aa).

An ATP-binding site is contributed by 14–19 (GAGKST). Mg(2+) is bound at residue Ser18. Positions 36, 60, and 82 each coordinate substrate. Arg120 serves as a coordination point for ATP. Substrate is bound at residue Arg140. Gln157 provides a ligand contact to ATP.

The protein belongs to the shikimate kinase family. As to quaternary structure, monomer. The cofactor is Mg(2+).

The protein localises to the cytoplasm. It catalyses the reaction shikimate + ATP = 3-phosphoshikimate + ADP + H(+). It participates in metabolic intermediate biosynthesis; chorismate biosynthesis; chorismate from D-erythrose 4-phosphate and phosphoenolpyruvate: step 5/7. Its function is as follows. Catalyzes the specific phosphorylation of the 3-hydroxyl group of shikimic acid using ATP as a cosubstrate. The sequence is that of Shikimate kinase 1 from Citrobacter koseri (strain ATCC BAA-895 / CDC 4225-83 / SGSC4696).